A 273-amino-acid chain; its full sequence is Large ribosomal subunit protein uL2cz/uL2cy (273 aa).

2 disordered regions span residues 1–22 and 225–273; these read MAKH…DRQV and PVDH…RRRK.

This sequence belongs to the universal ribosomal protein uL2 family. In terms of assembly, part of the 50S ribosomal subunit.

Its subcellular location is the plastid. It localises to the chloroplast. In Zea mays (Maize), this protein is Large ribosomal subunit protein uL2cz/uL2cy (rpl2-A).